Consider the following 89-residue polypeptide: Protein PerC (89 aa).

Transcriptional activator of eaeA/bfpA expression in enteropathogenic E.coli. The polypeptide is Protein PerC (perC) (Escherichia coli O111:H-).